The sequence spans 421 residues: Cytochrome c biogenesis protein Ccs1 (421 aa).

Helical transmembrane passes span 12-32, 71-91, and 157-177; these read LRFA…GTVI, TWWF…CTLL, and IAPI…IIGS.

This sequence belongs to the Ccs1/CcsB family. May interact with CcsA.

It is found in the plastid. The protein resides in the chloroplast thylakoid membrane. Functionally, required during biogenesis of c-type cytochromes (cytochrome c6 and cytochrome f) at the step of heme attachment. This chain is Cytochrome c biogenesis protein Ccs1, found in Thalassiosira pseudonana (Marine diatom).